The chain runs to 543 residues: Putative pectinesterase/pectinesterase inhibitor 22 (543 aa).

An N-terminal signal peptide occupies residues 1–19 (MGITTALLLVMLMSVHTSS). Positions 38–197 (AKACQFIDAH…TQLVSNVLDM (160 aa)) are pectinesterase inhibitor 22. 2 N-linked (GlcNAc...) asparagine glycosylation sites follow: N211 and N263. Positions 240 to 527 (NTVVAIDGKG…FTVGSFIDGR (288 aa)) are pectinesterase 22. Substrate-binding residues include T315 and Q345. Catalysis depends on D368, which acts as the Proton donor; for pectinesterase activity. An intrachain disulfide couples C382 to C402. D389 acts as the Nucleophile; for pectinesterase activity in catalysis. Residues R448 and W450 each coordinate substrate.

In the N-terminal section; belongs to the PMEI family. It in the C-terminal section; belongs to the pectinesterase family.

Its subcellular location is the secreted. It localises to the cell wall. It carries out the reaction [(1-&gt;4)-alpha-D-galacturonosyl methyl ester](n) + n H2O = [(1-&gt;4)-alpha-D-galacturonosyl](n) + n methanol + n H(+). It participates in glycan metabolism; pectin degradation; 2-dehydro-3-deoxy-D-gluconate from pectin: step 1/5. Its function is as follows. Acts in the modification of cell walls via demethylesterification of cell wall pectin. The sequence is that of Putative pectinesterase/pectinesterase inhibitor 22 (PME22) from Arabidopsis thaliana (Mouse-ear cress).